Here is a 443-residue protein sequence, read N- to C-terminus: ATP-dependent protease ATPase subunit HslU (443 aa).

ATP-binding positions include V18 and G60–E65. The tract at residues A139–R160 is disordered. D256, E321, and R393 together coordinate ATP.

Belongs to the ClpX chaperone family. HslU subfamily. As to quaternary structure, a double ring-shaped homohexamer of HslV is capped on each side by a ring-shaped HslU homohexamer. The assembly of the HslU/HslV complex is dependent on binding of ATP.

It is found in the cytoplasm. Its function is as follows. ATPase subunit of a proteasome-like degradation complex; this subunit has chaperone activity. The binding of ATP and its subsequent hydrolysis by HslU are essential for unfolding of protein substrates subsequently hydrolyzed by HslV. HslU recognizes the N-terminal part of its protein substrates and unfolds these before they are guided to HslV for hydrolysis. This chain is ATP-dependent protease ATPase subunit HslU, found in Sodalis glossinidius (strain morsitans).